Consider the following 277-residue polypeptide: Large ribosomal subunit protein uL2 (277 aa).

Residues 225–277 (MNPIDHPHGGGEGKTAAGRHPVSPWGTPSKGFRTRVNKRTDGMIVRRRYSNKG) form a disordered region.

It belongs to the universal ribosomal protein uL2 family. Part of the 50S ribosomal subunit. Forms a bridge to the 30S subunit in the 70S ribosome.

One of the primary rRNA binding proteins. Required for association of the 30S and 50S subunits to form the 70S ribosome, for tRNA binding and peptide bond formation. It has been suggested to have peptidyltransferase activity; this is somewhat controversial. Makes several contacts with the 16S rRNA in the 70S ribosome. This chain is Large ribosomal subunit protein uL2, found in Nitrosospira multiformis (strain ATCC 25196 / NCIMB 11849 / C 71).